The sequence spans 138 residues: Vesicle transport protein GOT1B (138 aa).

M1 is subject to N-acetylmethionine. Over 1-9 the chain is Cytoplasmic; sequence MISLTDTQK. Residues 10 to 30 form a helical membrane-spanning segment; that stretch reads IGMGLTGFGVFFLFFGMILFF. Residues 31 to 32 are Lumenal-facing; that stretch reads DK. A helical transmembrane segment spans residues 33–53; the sequence is ALLAIGNVLFVAGLAFVIGLE. The Cytoplasmic portion of the chain corresponds to 54–68; sequence RTFRFFFQKHKMKAT. The helical transmembrane segment at 69-89 threads the bilayer; sequence GFFLGGVFVVLIGWPLIGMIF. E90 is a topological domain (lumenal). A helical transmembrane segment spans residues 91-109; the sequence is IYGFFLLFRGFFPVVVGFI. Residues 110–138 are Cytoplasmic-facing; it reads RRVPVLGSLLNLPGIRSFVDKVGESNNMV.

It belongs to the GOT1 family.

The protein localises to the golgi apparatus membrane. May be involved in fusion of ER-derived transport vesicles with the Golgi complex. The protein is Vesicle transport protein GOT1B of Bos taurus (Bovine).